We begin with the raw amino-acid sequence, 143 residues long: Insertion element IS2 uncharacterized 16.4 kDa protein (143 aa).

In Escherichia coli, this protein is Insertion element IS2 uncharacterized 16.4 kDa protein.